The following is a 502-amino-acid chain: Histidine--tRNA ligase (502 aa).

It belongs to the class-II aminoacyl-tRNA synthetase family. As to quaternary structure, homodimer.

It is found in the cytoplasm. It catalyses the reaction tRNA(His) + L-histidine + ATP = L-histidyl-tRNA(His) + AMP + diphosphate + H(+). This Brucella ovis (strain ATCC 25840 / 63/290 / NCTC 10512) protein is Histidine--tRNA ligase.